We begin with the raw amino-acid sequence, 248 residues long: 1-(5-phosphoribosyl)-5-[(5-phosphoribosylamino)methylideneamino] imidazole-4-carboxamide isomerase (248 aa).

Asp8 serves as the catalytic Proton acceptor. The active-site Proton donor is Asp131.

The protein belongs to the HisA/HisF family.

Its subcellular location is the cytoplasm. The enzyme catalyses 1-(5-phospho-beta-D-ribosyl)-5-[(5-phospho-beta-D-ribosylamino)methylideneamino]imidazole-4-carboxamide = 5-[(5-phospho-1-deoxy-D-ribulos-1-ylimino)methylamino]-1-(5-phospho-beta-D-ribosyl)imidazole-4-carboxamide. The protein operates within amino-acid biosynthesis; L-histidine biosynthesis; L-histidine from 5-phospho-alpha-D-ribose 1-diphosphate: step 4/9. The chain is 1-(5-phosphoribosyl)-5-[(5-phosphoribosylamino)methylideneamino] imidazole-4-carboxamide isomerase from Cupriavidus taiwanensis (strain DSM 17343 / BCRC 17206 / CCUG 44338 / CIP 107171 / LMG 19424 / R1) (Ralstonia taiwanensis (strain LMG 19424)).